The chain runs to 474 residues: Probable glycine dehydrogenase (decarboxylating) subunit 2 (474 aa).

Lys-262 carries the N6-(pyridoxal phosphate)lysine modification.

This sequence belongs to the GcvP family. C-terminal subunit subfamily. As to quaternary structure, the glycine cleavage system is composed of four proteins: P, T, L and H. In this organism, the P 'protein' is a heterodimer of two subunits. Requires pyridoxal 5'-phosphate as cofactor.

It carries out the reaction N(6)-[(R)-lipoyl]-L-lysyl-[glycine-cleavage complex H protein] + glycine + H(+) = N(6)-[(R)-S(8)-aminomethyldihydrolipoyl]-L-lysyl-[glycine-cleavage complex H protein] + CO2. Functionally, the glycine cleavage system catalyzes the degradation of glycine. The P protein binds the alpha-amino group of glycine through its pyridoxal phosphate cofactor; CO(2) is released and the remaining methylamine moiety is then transferred to the lipoamide cofactor of the H protein. In Thermotoga maritima (strain ATCC 43589 / DSM 3109 / JCM 10099 / NBRC 100826 / MSB8), this protein is Probable glycine dehydrogenase (decarboxylating) subunit 2.